Here is a 126-residue protein sequence, read N- to C-terminus: Histone H2B type 1-C/E/G (126 aa).

Low complexity predominate over residues 1 to 12 (MPEPAKSAPAPK). Residues 1-36 (MPEPAKSAPAPKKGSKKAVTKAQKKDGKKRKRSRKE) are disordered. Position 2 is an N-acetylproline (proline 2). Glutamate 3 is subject to ADP-ribosyl glutamic acid. Lysine 6 carries the N6-(2-hydroxyisobutyryl)lysine; alternate modification. At lysine 6 the chain carries N6-(beta-hydroxybutyryl)lysine; alternate. Lysine 6 carries the post-translational modification N6-acetyllysine; alternate. Residue lysine 6 is modified to N6-butyryllysine; alternate. At lysine 6 the chain carries N6-crotonyllysine; alternate. Position 6 is an N6-lactoyllysine; alternate (lysine 6). Lysine 6 is covalently cross-linked (Glycyl lysine isopeptide (Lys-Gly) (interchain with G-Cter in SUMO2); alternate). The residue at position 7 (serine 7) is an ADP-ribosylserine. An N6-(beta-hydroxybutyryl)lysine; alternate modification is found at lysine 12. An N6-acetyllysine; alternate mark is found at lysine 12 and lysine 13. Residues lysine 12 and lysine 13 each carry the N6-crotonyllysine; alternate modification. Lysine 12 bears the N6-lactoyllysine; alternate mark. Lysine 13 is modified (N6-(2-hydroxyisobutyryl)lysine; alternate). Serine 15 is modified (phosphoserine; by STK4/MST1). An N6-acetyllysine; alternate mark is found at lysine 16, lysine 17, lysine 21, and lysine 24. Lysine 16, lysine 17, lysine 21, and lysine 24 each carry N6-crotonyllysine; alternate. An N6-lactoyllysine; alternate mark is found at lysine 16, lysine 17, lysine 21, and lysine 24. The residue at position 17 (lysine 17) is an N6-glutaryllysine; alternate. An N6-(2-hydroxyisobutyryl)lysine; alternate mark is found at lysine 21 and lysine 24. Lysine 21 bears the N6-(beta-hydroxybutyryl)lysine; alternate mark. Lysine 21 is subject to N6-butyryllysine; alternate. A Glycyl lysine isopeptide (Lys-Gly) (interchain with G-Cter in SUMO2); alternate cross-link involves residue lysine 21. Lysine 25 is subject to N6-(2-hydroxyisobutyryl)lysine. Residue lysine 35 is modified to N6-(2-hydroxyisobutyryl)lysine; alternate. Residue lysine 35 is modified to N6-(beta-hydroxybutyryl)lysine; alternate. Lysine 35 bears the N6-crotonyllysine; alternate mark. Lysine 35 carries the post-translational modification N6-glutaryllysine; alternate. The residue at position 35 (lysine 35) is an N6-succinyllysine; alternate. Lysine 35 is covalently cross-linked (Glycyl lysine isopeptide (Lys-Gly) (interchain with G-Cter in ubiquitin); alternate). Glutamate 36 is modified (polyADP-ribosyl glutamic acid). Phosphoserine; by AMPK is present on serine 37. Lysine 44, lysine 47, and lysine 58 each carry N6-(2-hydroxyisobutyryl)lysine; alternate. Position 44 is an N6-lactoyllysine; alternate (lysine 44). N6-glutaryllysine; alternate is present on residues lysine 44 and lysine 47. N6-methyllysine; alternate is present on lysine 47. The residue at position 58 (lysine 58) is an N6,N6-dimethyllysine; alternate. Arginine 80 is subject to Dimethylated arginine. Lysine 86 carries the post-translational modification N6-(2-hydroxyisobutyryl)lysine; alternate. Residue lysine 86 is modified to N6-acetyllysine; alternate. Residue lysine 86 is modified to N6-lactoyllysine; alternate. Lysine 86 carries the post-translational modification N6,N6,N6-trimethyllysine; alternate. An omega-N-methylarginine mark is found at arginine 87 and arginine 93. An N6-(2-hydroxyisobutyryl)lysine; alternate modification is found at lysine 109. Lysine 109 carries the N6-(beta-hydroxybutyryl)lysine; alternate modification. At lysine 109 the chain carries N6-lactoyllysine; alternate. Position 109 is an N6-glutaryllysine; alternate (lysine 109). The residue at position 109 (lysine 109) is an N6-methyllysine; alternate. Serine 113 is a glycosylation site (O-linked (GlcNAc) serine). Phosphothreonine is present on threonine 116. An N6-(2-hydroxyisobutyryl)lysine; alternate mark is found at lysine 117 and lysine 121. The residue at position 117 (lysine 117) is an N6-(beta-hydroxybutyryl)lysine; alternate. Residues lysine 117 and lysine 121 each carry the N6-lactoyllysine; alternate modification. 2 positions are modified to N6-glutaryllysine; alternate: lysine 117 and lysine 121. N6-succinyllysine; alternate occurs at positions 117 and 121. N6-methylated lysine; alternate is present on lysine 117. A Glycyl lysine isopeptide (Lys-Gly) (interchain with G-Cter in ubiquitin); alternate cross-link involves residue lysine 121.

It belongs to the histone H2B family. In terms of assembly, the nucleosome is a histone octamer containing two molecules each of H2A, H2B, H3 and H4 assembled in one H3-H4 heterotetramer and two H2A-H2B heterodimers. The octamer wraps approximately 147 bp of DNA. Interacts with VRK1; the interaction is mediated by the nucleosome acidic patch, a cluster of negatively charged residues of H2A and H2B forming a cleft within the nucleosome core. Monoubiquitination at Lys-35 (H2BK34Ub) by the MSL1/MSL2 dimer is required for histone H3 'Lys-4' (H3K4me) and 'Lys-79' (H3K79me) methylation and transcription activation at specific gene loci, such as HOXA9 and MEIS1 loci. Similarly, monoubiquitination at Lys-121 (H2BK120Ub) by the RNF20/40 complex gives a specific tag for epigenetic transcriptional activation and is also prerequisite for histone H3 'Lys-4' and 'Lys-79' methylation. It also functions cooperatively with the FACT dimer to stimulate elongation by RNA polymerase II. H2BK120Ub also acts as a regulator of mRNA splicing: deubiquitination by USP49 is required for efficient cotranscriptional splicing of a large set of exons. In terms of processing, phosphorylated on Ser-15 (H2BS14ph) by STK4/MST1 during apoptosis; which facilitates apoptotic chromatin condensation. Also phosphorylated on Ser-15 in response to DNA double strand breaks (DSBs), and in correlation with somatic hypermutation and immunoglobulin class-switch recombination. Phosphorylation at Ser-37 (H2BS36ph) by AMPK in response to stress promotes transcription. Post-translationally, glcNAcylation at Ser-113 promotes monoubiquitination of Lys-121. It fluctuates in response to extracellular glucose, and associates with transcribed genes. ADP-ribosylated by PARP1 or PARP2 on Ser-7 (H2BS6ADPr) in response to DNA damage. H2BS6ADPr promotes recruitment of CHD1L. Mono-ADP-ribosylated on Glu-3 (H2BE2ADPr) by PARP3 in response to single-strand breaks. Poly ADP-ribosylation on Glu-36 (H2BE35ADPr) by PARP1 regulates adipogenesis: it inhibits phosphorylation at Ser-37 (H2BS36ph), thereby blocking expression of pro-adipogenetic genes. In terms of processing, crotonylation (Kcr) is specifically present in male germ cells and marks testis-specific genes in post-meiotic cells, including X-linked genes that escape sex chromosome inactivation in haploid cells. Crotonylation marks active promoters and enhancers and confers resistance to transcriptional repressors. It is also associated with post-meiotically activated genes on autosomes. Post-translationally, hydroxybutyrylation of histones is induced by starvation. Lactylated in macrophages by EP300/P300 by using lactoyl-CoA directly derived from endogenous or exogenous lactate, leading to stimulates gene transcription.

It is found in the nucleus. The protein localises to the chromosome. Its function is as follows. Core component of nucleosome. Nucleosomes wrap and compact DNA into chromatin, limiting DNA accessibility to the cellular machineries which require DNA as a template. Histones thereby play a central role in transcription regulation, DNA repair, DNA replication and chromosomal stability. DNA accessibility is regulated via a complex set of post-translational modifications of histones, also called histone code, and nucleosome remodeling. The chain is Histone H2B type 1-C/E/G from Mus musculus (Mouse).